We begin with the raw amino-acid sequence, 637 residues long: Chaperone protein HtpG (637 aa).

Residues 1–345 (MSHQETHGFQ…SNDLPLNVSR (345 aa)) form an a; substrate-binding region. A b region spans residues 346-562 (EILQDNKVTR…EGEMSSQMIK (217 aa)). A c region spans residues 563–637 (LMQAAGQPVP…VNQMLLKSVG (75 aa)).

It belongs to the heat shock protein 90 family. As to quaternary structure, homodimer.

It localises to the cytoplasm. Its function is as follows. Molecular chaperone. Has ATPase activity. The protein is Chaperone protein HtpG of Shewanella amazonensis (strain ATCC BAA-1098 / SB2B).